Here is a 305-residue protein sequence, read N- to C-terminus: UDP-3-O-acyl-N-acetylglucosamine deacetylase (305 aa).

Positions 79, 238, and 242 each coordinate Zn(2+). Histidine 265 functions as the Proton donor in the catalytic mechanism.

Belongs to the LpxC family. Zn(2+) serves as cofactor.

The catalysed reaction is a UDP-3-O-[(3R)-3-hydroxyacyl]-N-acetyl-alpha-D-glucosamine + H2O = a UDP-3-O-[(3R)-3-hydroxyacyl]-alpha-D-glucosamine + acetate. It participates in glycolipid biosynthesis; lipid IV(A) biosynthesis; lipid IV(A) from (3R)-3-hydroxytetradecanoyl-[acyl-carrier-protein] and UDP-N-acetyl-alpha-D-glucosamine: step 2/6. Its function is as follows. Catalyzes the hydrolysis of UDP-3-O-myristoyl-N-acetylglucosamine to form UDP-3-O-myristoylglucosamine and acetate, the committed step in lipid A biosynthesis. This is UDP-3-O-acyl-N-acetylglucosamine deacetylase from Vibrio atlanticus (strain LGP32) (Vibrio splendidus (strain Mel32)).